Reading from the N-terminus, the 545-residue chain is Membrane protein insertase YidC (545 aa).

The chain crosses the membrane as a helical span at residues 8–28; it reads ILLATVLSVGILILWQVIFPK. A disordered region spans residues 31–69; that stretch reads PPKPAPTPAAEVAKPAAPAAPAPGAAAPAVPAPPPDAPE. The segment covering 38 to 59 has biased composition (low complexity); that stretch reads PAAEVAKPAAPAAPAPGAAAPA. Helical transmembrane passes span 325–345, 355–375, 421–441, 458–478, and 497–517; these read IDYG…LYVM, WGVA…PLTY, LGGC…YAAL, LTAH…SFVM, and FFPG…TLYI.

It belongs to the OXA1/ALB3/YidC family. Type 1 subfamily. Interacts with the Sec translocase complex via SecD. Specifically interacts with transmembrane segments of nascent integral membrane proteins during membrane integration.

It is found in the cell inner membrane. Functionally, required for the insertion and/or proper folding and/or complex formation of integral membrane proteins into the membrane. Involved in integration of membrane proteins that insert both dependently and independently of the Sec translocase complex, as well as at least some lipoproteins. Aids folding of multispanning membrane proteins. The polypeptide is Membrane protein insertase YidC (Anaeromyxobacter dehalogenans (strain 2CP-C)).